Reading from the N-terminus, the 827-residue chain is Ribosome biogenesis protein ERB1 (827 aa).

The interval 1-129 (MVHSKKDKSV…DFSDDNDTRP (129 aa)) is disordered. Over residues 7–18 (DKSVMKHSDIKK) the composition is skewed to basic and acidic residues. Positions 45–60 (CDSDDDEEFQSAEEEV) are enriched in acidic residues. Low complexity predominate over residues 61-77 (LSSGSESSSKEGSTPGS). 2 stretches are compositionally biased toward acidic residues: residues 81–99 (GSDEEAEDEDADEEEDEDA) and 108–124 (EEGDSEGEYGSEDFSDD). The required for interaction with NOP7 stretch occupies residues 291–409 (RFVPSKHEAK…LRKVPGYGES (119 aa)). Residues 409–445 (SVRERFERSLDLYLAPRVRKNKLNIDPESLIPELPSP) form a required for interaction with YTM1 region. WD repeat units lie at residues 461 to 500 (GHKGKIRTLSIDPSGLWLATGSDDGTVRVWEILTGREVYK), 509 to 549 (NQDD…FEVE), 657 to 695 (KSKGIIMDAKFHPFKPQLFVCSQRYIRIYDLSQQVLVKK), 698 to 737 (PGARWLSTIDIHPRGDNLIASSFDKRVLWHDLDLAATPYK), 741 to 780 (YHEKAVRSVGFHKKLPLFCSAADDGTIHVFHGTVYDDMMK), and 796 to 827 (VNSLGVLDTVWHPREAWLFSAGADNTARLWTT).

It belongs to the WD repeat BOP1/ERB1 family. In terms of assembly, component of the NOP7 complex, composed of ERB1, NOP7 and YTM1. The complex is held together by ERB1, which interacts with NOP7 via its N-terminal domain and with YTM1 via a high-affinity interaction between the seven-bladed beta-propeller domains of the 2 proteins. The NOP7 complex associates with the 66S pre-ribosome.

Its subcellular location is the nucleus. The protein resides in the nucleolus. The protein localises to the nucleoplasm. In terms of biological role, component of the NOP7 complex, which is required for maturation of the 25S and 5.8S ribosomal RNAs and formation of the 60S ribosome. The polypeptide is Ribosome biogenesis protein ERB1 (Eremothecium gossypii (strain ATCC 10895 / CBS 109.51 / FGSC 9923 / NRRL Y-1056) (Yeast)).